A 354-amino-acid chain; its full sequence is Histidinol-phosphate aminotransferase (354 aa).

Lys222 bears the N6-(pyridoxal phosphate)lysine mark.

This sequence belongs to the class-II pyridoxal-phosphate-dependent aminotransferase family. Histidinol-phosphate aminotransferase subfamily. As to quaternary structure, homodimer. Pyridoxal 5'-phosphate serves as cofactor.

The enzyme catalyses L-histidinol phosphate + 2-oxoglutarate = 3-(imidazol-4-yl)-2-oxopropyl phosphate + L-glutamate. Its pathway is amino-acid biosynthesis; L-histidine biosynthesis; L-histidine from 5-phospho-alpha-D-ribose 1-diphosphate: step 7/9. This Staphylococcus carnosus (strain TM300) protein is Histidinol-phosphate aminotransferase.